Here is a 164-residue protein sequence, read N- to C-terminus: MGKRSQKSSVLMVCVGNLCRSPIAEAVMRDLVARAGLQGEWHVESAGIEDWHSGHQPDERALNVLARHNIEYNGKARVLAPEDFLEFDYIFAMDLSNLAALRRMAPKGTTAKLLILGNFGLKPDERIIEDPYYDIGEASFEEIYRQCSIACRNFLKQARLKQIM.

C14 serves as the catalytic Nucleophile. The active site involves R20. The active-site Proton donor is the D130.

Belongs to the low molecular weight phosphotyrosine protein phosphatase family. As to expression, cone cells and primary pigment cells in developing pupal retina.

Its subcellular location is the cytoplasm. It carries out the reaction O-phospho-L-tyrosyl-[protein] + H2O = L-tyrosyl-[protein] + phosphate. It catalyses the reaction a phosphate monoester + H2O = an alcohol + phosphate. Its function is as follows. Catalyzes the dephosphorylation of tyrosine phosphorylated proteins and low-MW aryl phosphates. Can contribute to the regulation of a variety of developmental processes. This Drosophila melanogaster (Fruit fly) protein is Low molecular weight phosphotyrosine protein phosphatase 2 (primo-2).